Consider the following 210-residue polypeptide: Vacuolar protein sorting-associated protein 2 homolog 3 (210 aa).

The interval 1–23 (MNIFTKKPNPREVLRESKREMTQ) is disordered. The segment covering 9-23 (NPREVLRESKREMTQ) has biased composition (basic and acidic residues). A coiled-coil region spans residues 28 to 84 (IEKEIGSLQSEEKKLVLEIKRTAKSGNEGATKILARQLIRLRQQIANLQGSRAQMRG). Residues 178–200 (LSSAPKGKIGGKKAEDVGSSGID) are disordered.

It belongs to the SNF7 family. As to quaternary structure, component of the endosomal sorting required for transport complex III (ESCRT-III), composed at least of VPS2, VPS20, VPS24 and VPS32.

It localises to the endosome. In terms of biological role, component of the ESCRT-III complex, which is required for multivesicular bodies (MVBs) formation and sorting of endosomal cargo proteins into MVBs. The ESCRT-III complex is probably involved in the concentration of MVB cargo. The chain is Vacuolar protein sorting-associated protein 2 homolog 3 (VPS2.3) from Arabidopsis thaliana (Mouse-ear cress).